A 152-amino-acid polypeptide reads, in one-letter code: LILCVVVCTAAVLGTAAGYESQLPGCPPGAYPAICARYCYSDRDCASGYYCCNTGCLNICVPKPKPGLCPSITQSPCRGNVCNNDQDCPGNRKCCGKPGCKRCYRPKKPGSCPARKYEAGPCVVYCDGDFDCPGDKKCCGGCPRLCEKPCYD.

Positions 1–18 (LILCVVVCTAAVLGTAAG) are cleaved as a signal peptide. Residues 19–61 (YESQLPGCPPGAYPAICARYCYSDRDCASGYYCCNTGCLNICV) form the WAP 1 domain. 12 disulfides stabilise this stretch: Cys26-Cys52, Cys35-Cys56, Cys39-Cys51, Cys45-Cys60, Cys69-Cys95, Cys77-Cys100, Cys82-Cys94, Cys88-Cys103, Cys112-Cys139, Cys122-Cys142, Cys126-Cys138, and Cys132-Cys146. The region spanning 62–107 (PKPKPGLCPSITQSPCRGNVCNNDQDCPGNRKCCGKPGCKRCYRPK) is the WAP 2; atypical domain. A WAP 3 domain is found at 108-150 (KPGSCPARKYEAGPCVVYCDGDFDCPGDKKCCGGCPRLCEKPC).

Component of the acid-soluble and acid-insoluble organic matrix of prismatic shell layers (at protein level).

The protein localises to the secreted. Its function is as follows. Inhibits growth of calcium carbonate crystals. May inhibit growth of certain crystallographic planes in the mineral phase of nacre in the shell. The chain is Perlwapin from Haliotis asinina (Donkey's ear abalone).